Reading from the N-terminus, the 226-residue chain is Thiamine-phosphate synthase (226 aa).

Residues 46-50 and N87 each bind 4-amino-2-methyl-5-(diphosphooxymethyl)pyrimidine; that span reads QLRDK. The Mg(2+) site is built by D88 and D107. Residue S126 participates in 4-amino-2-methyl-5-(diphosphooxymethyl)pyrimidine binding. 152–154 serves as a coordination point for 2-[(2R,5Z)-2-carboxy-4-methylthiazol-5(2H)-ylidene]ethyl phosphate; it reads TPT. A 4-amino-2-methyl-5-(diphosphooxymethyl)pyrimidine-binding site is contributed by K155. Position 183 (G183) interacts with 2-[(2R,5Z)-2-carboxy-4-methylthiazol-5(2H)-ylidene]ethyl phosphate.

Belongs to the thiamine-phosphate synthase family. Requires Mg(2+) as cofactor.

The catalysed reaction is 2-[(2R,5Z)-2-carboxy-4-methylthiazol-5(2H)-ylidene]ethyl phosphate + 4-amino-2-methyl-5-(diphosphooxymethyl)pyrimidine + 2 H(+) = thiamine phosphate + CO2 + diphosphate. The enzyme catalyses 2-(2-carboxy-4-methylthiazol-5-yl)ethyl phosphate + 4-amino-2-methyl-5-(diphosphooxymethyl)pyrimidine + 2 H(+) = thiamine phosphate + CO2 + diphosphate. It carries out the reaction 4-methyl-5-(2-phosphooxyethyl)-thiazole + 4-amino-2-methyl-5-(diphosphooxymethyl)pyrimidine + H(+) = thiamine phosphate + diphosphate. Its pathway is cofactor biosynthesis; thiamine diphosphate biosynthesis; thiamine phosphate from 4-amino-2-methyl-5-diphosphomethylpyrimidine and 4-methyl-5-(2-phosphoethyl)-thiazole: step 1/1. In terms of biological role, condenses 4-methyl-5-(beta-hydroxyethyl)thiazole monophosphate (THZ-P) and 2-methyl-4-amino-5-hydroxymethyl pyrimidine pyrophosphate (HMP-PP) to form thiamine monophosphate (TMP). This chain is Thiamine-phosphate synthase, found in Mycobacterium sp. (strain KMS).